Reading from the N-terminus, the 511-residue chain is RNA-splicing ligase RtcB homolog (511 aa).

The Mn(2+) site is built by aspartate 125, cysteine 128, histidine 233, histidine 265, and histidine 359. Position 232 to 236 (asparagine 232 to glutamate 236) interacts with GMP. Residues histidine 359–asparagine 360, glycine 408–methionine 411, serine 415, histidine 434–glycine 437, and lysine 510 each bind GMP. Histidine 434 (GMP-histidine intermediate) is an active-site residue.

It belongs to the RtcB family. In terms of assembly, catalytic component of the tRNA-splicing ligase complex. It depends on Mn(2+) as a cofactor.

The catalysed reaction is a 3'-end 3'-phospho-ribonucleotide-RNA + a 5'-end dephospho-ribonucleoside-RNA + GTP = a ribonucleotidyl-ribonucleotide-RNA + GMP + diphosphate. It carries out the reaction a 3'-end 2',3'-cyclophospho-ribonucleotide-RNA + a 5'-end dephospho-ribonucleoside-RNA + GTP + H2O = a ribonucleotidyl-ribonucleotide-RNA + GMP + diphosphate + H(+). Catalytic subunit of the tRNA-splicing ligase complex that acts by directly joining spliced tRNA halves to mature-sized tRNAs by incorporating the precursor-derived splice junction phosphate into the mature tRNA as a canonical 3',5'-phosphodiester. May act as an RNA ligase with broad substrate specificity, and may function toward other RNAs. This Plasmodium knowlesi (strain H) protein is RNA-splicing ligase RtcB homolog.